The chain runs to 311 residues: Homeobox protein Hox-B1a (311 aa).

The segment at residues 217-276 (QNTIRTNFTTKQLTELEKEFHFSKYLTRARRVEIAATLELNETQVKIWFQNRRMKQKKRE) is a DNA-binding region (homeobox). Residues 267–311 (NRRMKQKKREKEGLAPASSTSSKDLEDQSDHSTSTSPEASPSPDS) are disordered. Low complexity predominate over residues 298-311 (STSTSPEASPSPDS).

The protein belongs to the Antp homeobox family. Labial subfamily.

The protein resides in the nucleus. Sequence-specific transcription factor which is part of a developmental regulatory system that provides cells with specific positional identities on the anterior-posterior axis. The sequence is that of Homeobox protein Hox-B1a (hoxb1a) from Danio rerio (Zebrafish).